Reading from the N-terminus, the 245-residue chain is NAD(P)H-hydrate epimerase (245 aa).

A YjeF N-terminal domain is found at 16–224; it reads AAALDAELMA…HIADKYDLEV (209 aa). 68–72 is a (6S)-NADPHX binding site; sequence NNGGD. K(+) contacts are provided by Asn69 and Asp131. (6S)-NADPHX is bound by residues 135–141 and Asp164; that span reads GFSFKPP. Position 167 (Ser167) interacts with K(+).

This sequence belongs to the NnrE/AIBP family. K(+) is required as a cofactor.

The protein resides in the cytoplasm. It localises to the mitochondrion. The catalysed reaction is (6R)-NADHX = (6S)-NADHX. It carries out the reaction (6R)-NADPHX = (6S)-NADPHX. Catalyzes the epimerization of the S- and R-forms of NAD(P)HX, a damaged form of NAD(P)H that is a result of enzymatic or heat-dependent hydration. This is a prerequisite for the S-specific NAD(P)H-hydrate dehydratase to allow the repair of both epimers of NAD(P)HX. This Yarrowia lipolytica (strain CLIB 122 / E 150) (Yeast) protein is NAD(P)H-hydrate epimerase.